The primary structure comprises 307 residues: MSEKLVEVKDLEISFGEGKKKFVAVKNANFFIKKGETFSLVGESGSGKTTIGRAIIGLNDTSSGQILYDGKVINGRKSKSEANELIRKIQMIFQDPAASLNERATVDYIISEGLYNFNLFKTEEERKEKIKNMMAEVGLLSEHLTRYPHEFSGGQRQRIGIARALVMNPEFVIADEPISALDVSVRAQVLNLLKRMQAEKGLTYLFIAHDLSVVRFISDRIAVIHKGVIVEVAETEELFNNPIHPYTQSLLSAVPIPDPILERQKELVVYHPDQHDYTLDKPSMVEIKPNHFVWANQAEIEKYQKEL.

Residues 6 to 251 (VEVKDLEISF…PIHPYTQSLL (246 aa)) form the ABC transporter domain. 42-49 (GESGSGKT) is an ATP binding site.

The protein belongs to the ABC transporter superfamily. As to quaternary structure, the complex is composed of two ATP-binding proteins (OppD and OppF), two transmembrane proteins (OppB and OppC) and a solute-binding protein (OppA).

The protein resides in the cell membrane. The enzyme catalyses a [peptide](out) + ATP + H2O = a [peptide](in) + ADP + phosphate + H(+). Its function is as follows. Part of the ABC transporter complex OppABCDF involved in the uptake of oligopeptides. Probably responsible for energy coupling to the transport system. This chain is Oligopeptide transport ATP-binding protein OppF (oppF), found in Streptococcus pyogenes serotype M1.